We begin with the raw amino-acid sequence, 249 residues long: ATP synthase subunit a, chloroplastic (249 aa).

A run of 5 helical transmembrane segments spans residues 40–60 (QVLITSWVVIAILLGSAVLAI), 97–117 (VPFIGTLFLFIFVSNWSGALL), 136–156 (INTTVALALLTSVAYFYAGLS), 201–221 (LVVVVLVSLVPLVVPIPVMFL), and 222–242 (GLFTSGIQALIFATLAAAYIG).

It belongs to the ATPase A chain family. In terms of assembly, F-type ATPases have 2 components, CF(1) - the catalytic core - and CF(0) - the membrane proton channel. CF(1) has five subunits: alpha(3), beta(3), gamma(1), delta(1), epsilon(1). CF(0) has four main subunits: a, b, b' and c.

The protein localises to the plastid. Its subcellular location is the chloroplast thylakoid membrane. In terms of biological role, key component of the proton channel; it plays a direct role in the translocation of protons across the membrane. This is ATP synthase subunit a, chloroplastic from Nasturtium officinale (Watercress).